The chain runs to 121 residues: Outer membrane lipoprotein BBA14 (121 aa).

The signal sequence occupies residues 1–19; that stretch reads MQIKNFPFLFLLNSLIIFS. Residue Cys-20 is the site of N-palmitoyl cysteine attachment. Cys-20 is lipidated: S-diacylglycerol cysteine.

The protein localises to the cell outer membrane. Its function is as follows. Outer membrane lipoprotein that could act as a component of a potential toxin-antitoxin system in B.burgdorferi which could serve as a plasmid stabilization mechanism in a growing bacterial population. The sequence is that of Outer membrane lipoprotein BBA14 from Borreliella burgdorferi (strain ATCC 35210 / DSM 4680 / CIP 102532 / B31) (Borrelia burgdorferi).